A 354-amino-acid polypeptide reads, in one-letter code: Isopentenyl-diphosphate delta-isomerase (354 aa).

Residue 6-7 coordinates substrate; sequence RK. FMN-binding positions include 63 to 65, Ser-93, and Asn-122; that span reads AMT. A substrate-binding site is contributed by 93–95; sequence SQR. Gln-160 contributes to the substrate binding site. Glu-161 is a binding site for Mg(2+). FMN is bound by residues Lys-192, Thr-221, 273 to 275, and 294 to 295; these read GIR and SQ.

Belongs to the IPP isomerase type 2 family. Homooctamer. Dimer of tetramers. FMN serves as cofactor. The cofactor is NADPH. It depends on Mg(2+) as a cofactor.

It localises to the cytoplasm. The enzyme catalyses isopentenyl diphosphate = dimethylallyl diphosphate. In terms of biological role, involved in the biosynthesis of isoprenoids. Catalyzes the 1,3-allylic rearrangement of the homoallylic substrate isopentenyl (IPP) to its allylic isomer, dimethylallyl diphosphate (DMAPP). This Pyrobaculum islandicum (strain DSM 4184 / JCM 9189 / GEO3) protein is Isopentenyl-diphosphate delta-isomerase.